Here is a 658-residue protein sequence, read N- to C-terminus: Pentatricopeptide repeat-containing protein At1g69290 (658 aa).

Disordered stretches follow at residues 1–23 (MFRK…ESPS) and 39–61 (TLSP…KSSF). Over residues 50 to 61 (PKTLTPDQKSSF) the composition is skewed to polar residues. PPR repeat units follow at residues 214-249 (DLVA…GVKP), 250-284 (DELS…GFAS), 285-320 (RRIL…GEES), 323-353 (SVET…AQKL), 361-395 (DSSV…GGGS), 397-431 (GIGV…GLQL), 432-466 (DVEI…RVVD), 467-497 (LKGS…VVED), 503-537 (NSHD…RYEP), 538-568 (NNQT…IKGK), and 581-615 (DHAL…KIFV).

It belongs to the PPR family. P subfamily.

In Arabidopsis thaliana (Mouse-ear cress), this protein is Pentatricopeptide repeat-containing protein At1g69290.